A 230-amino-acid chain; its full sequence is UPF0494 membrane protein C1348.07 (230 aa).

Transmembrane regions (helical) follow at residues 78-98, 120-140, and 148-168; these read WPLL…NFEV, IWGP…GLIY, and AIPL…VAMV.

The protein belongs to the UPF0494 family.

The protein localises to the vacuole. Its subcellular location is the membrane. The chain is UPF0494 membrane protein C1348.07 from Schizosaccharomyces pombe (strain 972 / ATCC 24843) (Fission yeast).